We begin with the raw amino-acid sequence, 687 residues long: Chloride channel protein ClC-Ka (687 aa).

The next 5 helical transmembrane spans lie at 52–72 (FLVA…FAIG), 94–114 (LSWT…SQSI), 161–181 (IFLG…AYLG), 204–224 (AAAV…LFSI), and 236–256 (YWRG…LGVF). Residues Glu259, Glu261, Asp278, and Glu281 each contribute to the Ca(2+) site. A run of 6 helical transmembrane segments spans residues 282-302 (IFFF…YLFC), 325-345 (PSYA…PGVG), 396-416 (FTIF…LILA), 417-437 (TTIP…AAIG), 458-478 (VNPI…SGAV), and 486-506 (LLAF…MAVL). Topologically, residues 507–687 (AANAISQNCQ…STLINPPAPK (181 aa)) are cytoplasmic. 2 consecutive CBS domains span residues 551-609 (MNCN…QPAS) and 626-687 (CPTQ…PAPK).

Belongs to the chloride channel (TC 2.A.49) family. CLCNKA subfamily. As to quaternary structure, homodimer. Interacts with BSND. As to expression, expressed predominantly in the kidney. Expressed strongly in the cortical thick ascending limb and the distal convoluted tubule, with minor expression in the S3 segment of the proximal tubule and the cortical collecting tubule.

It localises to the basolateral cell membrane. The catalysed reaction is chloride(in) = chloride(out). It carries out the reaction bromide(in) = bromide(out). It catalyses the reaction nitrate(in) = nitrate(out). The enzyme catalyses iodide(out) = iodide(in). Its activity is regulated as follows. Activated by extracellular Ca(2+) and inhibited by extracellular acidic pH. In terms of biological role, anion-selective channel permeable to small monovalent anions with ion selectivity for chloride &gt; bromide &gt; nitrate &gt; iodide. Forms a homodimeric channel where each subunit has its own ion conduction pathway. Conducts double-barreled currents controlled by two types of gates, two fast gates that control each subunit independently and a slow common gate that opens and shuts off both subunits simultaneously. Assembles with the regulatory subunit BSND/Barttin for sorting at the basolateral plasma membrane domain. CLCNKA:BSND channels are activated upon membrane hyperpolarization mostly controlled by fast gating. Mediates transepithelial chloride transport from the lumen to interstitial compartment along the thin ascending limb of Henle's loop, contributing to generation of hypertonic medullary interstitium as a countercurrent system to achieve urine concentration. Conducts chloride currents in the stria vascularis of the inner ear to establish the endocochlear potential necessary for normal hearing. The polypeptide is Chloride channel protein ClC-Ka (Rattus norvegicus (Rat)).